The sequence spans 303 residues: Albumin b-32 (303 aa).

Residues 112–137 (ATPTSSATTPGGSASAAGTRTSSATR) are compositionally biased toward low complexity. The disordered stretch occupies residues 112–175 (ATPTSSATTP…GGGGADADAD (64 aa)). A compositionally biased stretch (basic and acidic residues) spans 146-156 (ARDDQGRQRPG).

This sequence belongs to the ribosome-inactivating protein family. Type 1 RIP subfamily. In terms of assembly, monomer. Endosperm.

It localises to the cytoplasm. The enzyme catalyses Endohydrolysis of the N-glycosidic bond at one specific adenosine on the 28S rRNA.. Its function is as follows. A possible regulatory factor for the synthesis of zeins, the major group of storage proteins. This is Albumin b-32 (O6) from Zea mays (Maize).